The primary structure comprises 192 residues: Immunoglobulin superfamily member 23 (192 aa).

Residues 1-26 (MRAKPQSPLPRNPVPAWSPPTTTTDP) are disordered. The segment covering 7-18 (SPLPRNPVPAWS) has biased composition (pro residues). One can recognise an Ig-like domain in the interval 20–128 (PTTTTDPMLE…QLVSEPVTIS (109 aa)). N-linked (GlcNAc...) asparagine glycosylation occurs at Asn64. The helical transmembrane segment at 158–178 (LLAAGILGAGALIAGMCFIII) threads the bilayer.

Expressed in bone and small intestine. Highly expressed in osteoclasts, and low expressed in osteoblasts and peripheral blood mononuclear cells (PBMCs).

It localises to the cell membrane. In terms of biological role, may be involved in osteoclast differentiation. In Homo sapiens (Human), this protein is Immunoglobulin superfamily member 23.